Consider the following 722-residue polypeptide: Inactive serine protease PAMR1 (722 aa).

The first 21 residues, 1-21 (MALLVWSSLVVASLHLLGTAA), serve as a signal peptide directing secretion. N-linked (GlcNAc...) asparagine glycosylation is present at Asn-98. Disulfide bonds link Cys-130-Cys-152, Cys-179-Cys-201, Cys-241-Cys-252, Cys-246-Cys-262, Cys-264-Cys-273, Cys-282-Cys-331, Cys-317-Cys-344, and Cys-416-Cys-444. In terms of domain architecture, CUB spans 130–238 (CGEVIQAARG…DGFYVTFEEV (109 aa)). An EGF-like domain is found at 237-274 (EVTGCSSTPCFHDGTCIADKTGSYRCACLAGYTGRHCE). 2 consecutive Sushi domains span residues 280-346 (KSCK…VCIK) and 393-446 (KPAL…SCIP). N-linked (GlcNAc...) asparagine glycosylation is present at Asn-318. The Peptidase S1 domain occupies 447–722 (ICGKLENFNI…FKEWLEKNMK (276 aa)). An N-linked (GlcNAc...) asparagine glycan is attached at Asn-455. A disulfide bond links Cys-491 and Cys-507. Asn-616 carries an N-linked (GlcNAc...) asparagine glycan. Disulfide bonds link Cys-632–Cys-651 and Cys-663–Cys-699.

This sequence belongs to the peptidase S1 family.

It is found in the secreted. In terms of biological role, may play a role in regeneration of skeletal muscle. This chain is Inactive serine protease PAMR1 (pamr1), found in Xenopus tropicalis (Western clawed frog).